Consider the following 87-residue polypeptide: Sodium channel neurotoxin MeuNaTxalpha-5* (87 aa).

A signal peptide spans 1–19 (MNYLILISFALLVITGVES). An LCN-type CS-alpha/beta domain is found at 21–85 (RDAYIAKPHN…VPIRIPGKCH (65 aa)). 4 disulfide bridges follow: Cys31/Cys84, Cys35/Cys57, Cys43/Cys67, and Cys47/Cys69. The propeptide at 86–87 (RR) is removed by a carboxypeptidase.

The protein belongs to the long (4 C-C) scorpion toxin superfamily. Sodium channel inhibitor family. Alpha subfamily. Expressed by the venom gland.

Its subcellular location is the secreted. Functionally, alpha toxins bind voltage-independently at site-3 of sodium channels (Nav) and inhibit the inactivation of the activated channels, thereby blocking neuronal transmission. This toxin inhibits inactivation of Nav1.6/SCN8A (EC(50)=790 nM) and drosophila DmNav1 (EC(50)=280 nM). The toxin (1 uM) does not significantly shift the midpoint of activation at the two channels, but induces a significant depolarizing shift in the V(1/2) of inactivation of the channels. Has antimicrobial activity. This chain is Sodium channel neurotoxin MeuNaTxalpha-5*, found in Mesobuthus eupeus (Lesser Asian scorpion).